Consider the following 142-residue polypeptide: Large ribosomal subunit protein uL13 (142 aa).

This sequence belongs to the universal ribosomal protein uL13 family. In terms of assembly, part of the 50S ribosomal subunit.

This protein is one of the early assembly proteins of the 50S ribosomal subunit, although it is not seen to bind rRNA by itself. It is important during the early stages of 50S assembly. This Aeromonas salmonicida (strain A449) protein is Large ribosomal subunit protein uL13.